The primary structure comprises 235 residues: Aspartate/glutamate leucyltransferase (235 aa).

The protein belongs to the R-transferase family. Bpt subfamily.

Its subcellular location is the cytoplasm. The catalysed reaction is N-terminal L-glutamyl-[protein] + L-leucyl-tRNA(Leu) = N-terminal L-leucyl-L-glutamyl-[protein] + tRNA(Leu) + H(+). It catalyses the reaction N-terminal L-aspartyl-[protein] + L-leucyl-tRNA(Leu) = N-terminal L-leucyl-L-aspartyl-[protein] + tRNA(Leu) + H(+). Its function is as follows. Functions in the N-end rule pathway of protein degradation where it conjugates Leu from its aminoacyl-tRNA to the N-termini of proteins containing an N-terminal aspartate or glutamate. This chain is Aspartate/glutamate leucyltransferase, found in Pseudomonas aeruginosa (strain LESB58).